Consider the following 334-residue polypeptide: Ethanol acetyltransferase 1 (334 aa).

Residues 1–16 (MFASNVVVLNKRSIRF) constitute a mitochondrion transit peptide. Active-site charge relay system residues include Ser124, Asp148, and His296.

Belongs to the AB hydrolase superfamily.

Its subcellular location is the mitochondrion. It carries out the reaction ethanol + acetyl-CoA = ethyl acetate + CoA. It catalyses the reaction acetyl-CoA + H2O = acetate + CoA + H(+). The catalysed reaction is ethyl acetate + H2O = ethanol + acetate + H(+). Functionally, alcohol acetyltransferase that catalyzes the synthesis of ethyl acetate from ethanol and acetyl-CoA. Can also function as a thioesterase by hydrolyzing acetyl-CoA in the absence of ethanol, as well as esterase hydrolyzing ethyl acetate. The chain is Ethanol acetyltransferase 1 (EAT1) from Hanseniaspora uvarum (Yeast).